Reading from the N-terminus, the 203-residue chain is Outer-membrane lipoprotein LolB (203 aa).

Positions 1-16 (MKTFLPCLFFLLILVG) are cleaved as a signal peptide. The N-palmitoyl cysteine moiety is linked to residue Cys17. A lipid anchor (S-diacylglycerol cysteine) is attached at Cys17.

This sequence belongs to the LolB family. As to quaternary structure, monomer.

The protein localises to the cell outer membrane. In terms of biological role, plays a critical role in the incorporation of lipoproteins in the outer membrane after they are released by the LolA protein. The polypeptide is Outer-membrane lipoprotein LolB (Psychromonas ingrahamii (strain DSM 17664 / CCUG 51855 / 37)).